The primary structure comprises 99 residues: NADH-quinone oxidoreductase subunit K (99 aa).

Transmembrane regions (helical) follow at residues 3 to 23, 28 to 48, and 59 to 79; these read PDNYLYLSALLFTIGAAGVLL, IVMFMCIELMLNAANLAFVTF, and VVAFFTMVVAACEVVIGLAII.

Belongs to the complex I subunit 4L family. NDH-1 is composed of 14 different subunits. Subunits NuoA, H, J, K, L, M, N constitute the membrane sector of the complex.

The protein localises to the cell membrane. The catalysed reaction is a quinone + NADH + 5 H(+)(in) = a quinol + NAD(+) + 4 H(+)(out). In terms of biological role, NDH-1 shuttles electrons from NADH, via FMN and iron-sulfur (Fe-S) centers, to quinones in the respiratory chain. The immediate electron acceptor for the enzyme in this species is believed to be a menaquinone. Couples the redox reaction to proton translocation (for every two electrons transferred, four hydrogen ions are translocated across the cytoplasmic membrane), and thus conserves the redox energy in a proton gradient. This is NADH-quinone oxidoreductase subunit K from Mycolicibacterium vanbaalenii (strain DSM 7251 / JCM 13017 / BCRC 16820 / KCTC 9966 / NRRL B-24157 / PYR-1) (Mycobacterium vanbaalenii).